The sequence spans 225 residues: Urease accessory protein UreF (225 aa).

It belongs to the UreF family. As to quaternary structure, ureD, UreF and UreG form a complex that acts as a GTP-hydrolysis-dependent molecular chaperone, activating the urease apoprotein by helping to assemble the nickel containing metallocenter of UreC. The UreE protein probably delivers the nickel.

It is found in the cytoplasm. Required for maturation of urease via the functional incorporation of the urease nickel metallocenter. In Thermosynechococcus vestitus (strain NIES-2133 / IAM M-273 / BP-1), this protein is Urease accessory protein UreF.